Here is a 783-residue protein sequence, read N- to C-terminus: Cation/H(+) antiporter 11 (783 aa).

12 consecutive transmembrane segments (helical) span residues 31 to 51 (VVFG…FFCI), 61 to 81 (IGVS…PQLF), 101 to 120 (AALR…LMTV), 135 to 155 (VVIG…LNLF), 175 to 195 (VIVI…LLEL), 205 to 225 (LALS…IVAT), 244 to 264 (AVII…QWII), 276 to 295 (IYIH…FVFF), 300 to 322 (VLGP…ALEA), 360 to 380 (IFLT…LCLY), 389 to 409 (LAVS…YEAV), and 418 to 438 (ATYA…PMVV).

Belongs to the monovalent cation:proton antiporter 2 (CPA2) transporter (TC 2.A.37) family. CHX (TC 2.A.37.4) subfamily. As to expression, specifically expressed in pollen.

It is found in the membrane. Its function is as follows. May operate as a cation/H(+) antiporter. The polypeptide is Cation/H(+) antiporter 11 (CHX11) (Arabidopsis thaliana (Mouse-ear cress)).